Reading from the N-terminus, the 108-residue chain is UPF0060 membrane protein YnfA (108 aa).

The Periplasmic portion of the chain corresponds to 1–5 (MLKTT). Residues 6 to 26 (LLFFVTALCEIIGCFLPWLWI) traverse the membrane as a helical segment. Residues 27 to 30 (KRGA) are Cytoplasmic-facing. A helical membrane pass occupies residues 31–51 (SVWWLLPAAASLALFVWLLTL). Residues 52-60 (HPAASGRVY) are Periplasmic-facing. Residues 61–81 (AAYGGVYVCTALLWLRVVDGV) traverse the membrane as a helical segment. Topologically, residues 82–84 (RLT) are cytoplasmic. Residues 85 to 105 (VYDWCGALIALCGMLIIVVGW) traverse the membrane as a helical segment. Residues 106–108 (GRT) lie on the Periplasmic side of the membrane.

Belongs to the UPF0060 family.

It localises to the cell inner membrane. The sequence is that of UPF0060 membrane protein YnfA from Salmonella paratyphi A (strain ATCC 9150 / SARB42).